The following is a 351-amino-acid chain: Protein pelota homolog (351 aa).

It belongs to the eukaryotic release factor 1 family. Pelota subfamily. In terms of assembly, monomer. A divalent metal cation is required as a cofactor.

It localises to the cytoplasm. Functionally, may function in recognizing stalled ribosomes, interact with stem-loop structures in stalled mRNA molecules, and effect endonucleolytic cleavage of the mRNA. May play a role in the release non-functional ribosomes and degradation of damaged mRNAs. Has endoribonuclease activity. The polypeptide is Protein pelota homolog (Methanosphaera stadtmanae (strain ATCC 43021 / DSM 3091 / JCM 11832 / MCB-3)).